The following is a 592-amino-acid chain: Threonine--tRNA ligase (592 aa).

The interval aspartate 193–proline 488 is catalytic. 3 residues coordinate Zn(2+): cysteine 284, histidine 335, and histidine 465.

This sequence belongs to the class-II aminoacyl-tRNA synthetase family. In terms of assembly, homodimer. Requires Zn(2+) as cofactor.

It is found in the cytoplasm. The enzyme catalyses tRNA(Thr) + L-threonine + ATP = L-threonyl-tRNA(Thr) + AMP + diphosphate + H(+). Functionally, catalyzes the attachment of threonine to tRNA(Thr) in a two-step reaction: L-threonine is first activated by ATP to form Thr-AMP and then transferred to the acceptor end of tRNA(Thr). Also edits incorrectly charged L-seryl-tRNA(Thr). The chain is Threonine--tRNA ligase from Treponema pallidum (strain Nichols).